An 81-amino-acid chain; its full sequence is Acyl carrier protein (81 aa).

A Carrier domain is found at 3–78 (QEIFDKIKNI…EAVNIIAEKT (76 aa)). The residue at position 38 (Ser-38) is an O-(pantetheine 4'-phosphoryl)serine.

It belongs to the acyl carrier protein (ACP) family. Post-translationally, 4'-phosphopantetheine is transferred from CoA to a specific serine of apo-ACP by AcpS. This modification is essential for activity because fatty acids are bound in thioester linkage to the sulfhydryl of the prosthetic group.

It localises to the cytoplasm. Its pathway is lipid metabolism; fatty acid biosynthesis. In terms of biological role, carrier of the growing fatty acid chain in fatty acid biosynthesis. The protein is Acyl carrier protein of Picosynechococcus sp. (strain ATCC 27264 / PCC 7002 / PR-6) (Agmenellum quadruplicatum).